Reading from the N-terminus, the 1153-residue chain is Stress response protein nst1 (1153 aa).

Disordered regions lie at residues 1–212, 288–364, 421–467, and 507–941; these read MVPA…TSTQ, QGSF…DEET, ESLH…EQRM, and MEEE…TQRD. Residues 11–30 are compositionally biased toward low complexity; it reads SSSTMPNSSSTTAHSAPTTN. A compositionally biased stretch (basic residues) spans 53 to 63; it reads NRKKQKRRQKQ. Over residues 64–73 the composition is skewed to low complexity; that stretch reads AARLAERQLA. Residues 76–90 are compositionally biased toward polar residues; that stretch reads HVSTDDATQNGSSHT. 2 stretches are compositionally biased toward basic and acidic residues: residues 91 to 109 and 116 to 128; these read NPERHHSDDGGADGPDHEQ and YPKDGQDSTEAHI. Polar residues predominate over residues 129-140; sequence DSQNPQGPNGTE. The span at 146 to 160 shows a compositional bias: basic residues; that stretch reads TGRKSKKKKGKKGRN. Low complexity predominate over residues 169–182; that stretch reads TSTPMSTPSVSMSH. The segment covering 312-321 has biased composition (polar residues); it reads GQHTRTQGQF. 2 stretches are compositionally biased toward acidic residues: residues 332-363 and 433-462; these read TEDDDLEENYDEEEDDGDEPYSDEELDEEDEE and DDEDYDDEEDEDYDSQEEEDYEEDEMDAMT. A coiled-coil region spans residues 447 to 658; it reads SQEEEDYEED…EQQAKKDTAK (212 aa). Composition is skewed to basic and acidic residues over residues 507 to 526 and 536 to 674; these read MEEETRNEQRNAKKAREAQK and QAKE…DQAK. A compositionally biased stretch (low complexity) spans 721 to 739; the sequence is RQPSQQDSHSSSPHSQAPS. The segment covering 740–769 has biased composition (polar residues); sequence TDPSQASLSPRSMPVSQSSGVASGNSQQGQ. Over residues 913–925 the composition is skewed to low complexity; it reads PISRPSPIKRPSS. Positions 931–941 are enriched in basic and acidic residues; that stretch reads QKGDDRTTQRD.

This sequence belongs to the NST1 family.

The protein resides in the cytoplasm. Functionally, may act as a negative regulator of salt tolerance. This Aspergillus fumigatus (strain ATCC MYA-4609 / CBS 101355 / FGSC A1100 / Af293) (Neosartorya fumigata) protein is Stress response protein nst1 (nst1).